A 291-amino-acid chain; its full sequence is Serine hydrolase BPHL (291 aa).

Residues 1–37 (MVAVLGGRGVLRLRLLLSALKPGIHVPRAGPAAAFGT) form the signal peptide. Residues 62-181 (AVLLLPGMLG…DSMIYEGIRD (120 aa)) enclose the AB hydrolase-1 domain. Residues K86 and K119 each carry the N6-acetyllysine modification. At K126 the chain carries N6-acetyllysine; alternate. K126 carries the post-translational modification N6-succinyllysine; alternate. S139 serves as the catalytic Nucleophile. K184 bears the N6-succinyllysine mark. K191 is subject to N6-acetyllysine; alternate. K191 is modified (N6-succinyllysine; alternate). The residue at position 217 (K217) is an N6-acetyllysine. D221 serves as a coordination point for Mg(2+). K243 carries the post-translational modification N6-acetyllysine. The active-site Charge relay system is the D244. 2 positions are modified to N6-acetyllysine; alternate: K260 and K271. N6-succinyllysine; alternate occurs at positions 260 and 271. Catalysis depends on H272, which acts as the Charge relay system.

The protein belongs to the AB hydrolase superfamily. Lipase family. In terms of assembly, monomer. May also form homodimers. Expressed at high levels in liver and kidney and lower levels in heart, intestine and skeletal muscle.

It localises to the mitochondrion. It carries out the reaction L-homocysteine thiolactone + H2O = L-homocysteine + H(+). It catalyses the reaction valacyclovir + H2O = acyclovir + L-valine + H(+). Functionally, specific alpha-amino acid ester serine hydrolase that prefers small, hydrophobic, and aromatic side chains and does not have a stringent requirement for the leaving group other than preferring a primary alcohol. Has homocysteine-thiolactonase activity (in vitro) and may play a significant role in the detoxification of homocysteine thiolactone in vivo. Catalyzes the hydrolytic activation of amino acid ester prodrugs of nucleoside analogs such as valacyclovir and valganciclovir, converting them into their active forms (acyclovir and ganciclovir). This chain is Serine hydrolase BPHL (BPHL), found in Homo sapiens (Human).